The chain runs to 129 residues: Prefoldin subunit 4 (129 aa).

M1 carries the post-translational modification N-acetylmethionine.

This sequence belongs to the prefoldin subunit beta family. Heterohexamer of two PFD-alpha type and four PFD-beta type subunits.

Binds specifically to cytosolic chaperonin (c-CPN) and transfers target proteins to it. Binds to nascent polypeptide chain and promotes folding in an environment in which there are many competing pathways for nonnative proteins. The polypeptide is Prefoldin subunit 4 (GIM3) (Saccharomyces cerevisiae (strain ATCC 204508 / S288c) (Baker's yeast)).